A 255-amino-acid chain; its full sequence is MLNTLMLREWLRSMLRSCISKIFGDLMLISHISLSDKITLLTYGCNFKCKYCFFKPLSCKKYSVDEILNKILEVNENYKLDKILIAGGEPTLQNDLSELTKLLKDEGFYLMLSTNGYYLKDMLDKLEVDEIHIDLKAYDENKHIYLTSCSNKKVLDCISYIGKYRDEFNFKVEIDTVLIPNIVDLDEIEKIAKFLSNWDLPYRITGYVKYNNNLNAEKPDEDKILKAKEIALKYLSNVSCSLDFKRHKKSKKVII.

A Radical SAM core domain is found at 30 to 245; it reads SHISLSDKIT…SNVSCSLDFK (216 aa). [4Fe-4S] cluster is bound by residues Cys-45, Cys-49, and Cys-52. Residues 51 to 53, Gly-88, and 134 to 136 contribute to the S-adenosyl-L-methionine site; these read YCF and DLK.

It belongs to the organic radical-activating enzymes family. [4Fe-4S] cluster serves as cofactor.

The enzyme catalyses glycyl-[protein] + reduced [flavodoxin] + S-adenosyl-L-methionine = glycin-2-yl radical-[protein] + semiquinone [flavodoxin] + 5'-deoxyadenosine + L-methionine + H(+). The polypeptide is Putative glycyl-radical enzyme activating enzyme MJ1632 (Methanocaldococcus jannaschii (strain ATCC 43067 / DSM 2661 / JAL-1 / JCM 10045 / NBRC 100440) (Methanococcus jannaschii)).